The following is a 352-amino-acid chain: Ion-translocating oxidoreductase complex subunit D (352 aa).

5 consecutive transmembrane segments (helical) span residues 20–40 (IMLL…WFFG), 42–62 (GTLV…ALVL), 78–109 (ALLT…VIIA), 123–143 (PAMI…TSWL), and 148–168 (IAVN…GHTA). Thr187 bears the FMN phosphoryl threonine mark. Helical transmembrane passes span 214-234 (ILAG…GVWL), 242-262 (WHIP…GWLF), 267-287 (LAAP…FFIL), 301-321 (LIFG…GGYP), and 322-342 (DGVA…DYYT).

The protein belongs to the NqrB/RnfD family. The complex is composed of six subunits: RsxA, RsxB, RsxC, RsxD, RsxE and RsxG. Requires FMN as cofactor.

Its subcellular location is the cell inner membrane. In terms of biological role, part of a membrane-bound complex that couples electron transfer with translocation of ions across the membrane. Required to maintain the reduced state of SoxR. The polypeptide is Ion-translocating oxidoreductase complex subunit D (Escherichia coli O6:K15:H31 (strain 536 / UPEC)).